The following is a 212-amino-acid chain: External core antigen (212 aa).

The first 19 residues, 1-19 (MQLFHLCLVISCSCPTVQA), serve as a signal peptide directing secretion. Residues 25-27 (GWL) form an HBEAG region. The tract at residues 165-212 (NAPILSTLPETTVVRRRGRSPRRRTPSPRRRRSQSPRRRRSQSRESQC) is disordered. Basic residues predominate over residues 178-205 (VRRRGRSPRRRTPSPRRRRSQSPRRRRS). The 1; half-length repeat unit spans residues 184–190 (SPRRRTP). Positions 184-206 (SPRRRTPSPRRRRSQSPRRRRSQ) are 3 X 8 AA repeats of S-P-R-R-R-R-S-Q. Residues 184–212 (SPRRRTPSPRRRRSQSPRRRRSQSRESQC) constitute a propeptide that is removed on maturation. A run of 2 repeats spans residues 191–198 (SPRRRRSQ) and 199–206 (SPRRRRSQ).

It belongs to the orthohepadnavirus precore antigen family. Homodimerizes. In terms of processing, phosphorylated. Cleaved by host furin.

It localises to the secreted. It is found in the host nucleus. May regulate immune response to the intracellular capsid in acting as a T-cell tolerogen, by having an immunoregulatory effect which prevents destruction of infected cells by cytotoxic T-cells. This immune regulation may predispose to chronicity during perinatal infections and prevent severe liver injury during adult infections. This is External core antigen from Hepatitis B virus genotype B1 subtype adw (isolate Japan/pJDW233/1988) (HBV-B).